The chain runs to 438 residues: Glutamyl-tRNA(Gln) amidotransferase subunit D (438 aa).

One can recognise an Asparaginase/glutaminase domain in the interval P92–N422. Residues T102, T178, D179, and K256 contribute to the active site.

This sequence belongs to the asparaginase 1 family. GatD subfamily. As to quaternary structure, heterodimer of GatD and GatE.

It catalyses the reaction L-glutamyl-tRNA(Gln) + L-glutamine + ATP + H2O = L-glutaminyl-tRNA(Gln) + L-glutamate + ADP + phosphate + H(+). Functionally, allows the formation of correctly charged Gln-tRNA(Gln) through the transamidation of misacylated Glu-tRNA(Gln) in organisms which lack glutaminyl-tRNA synthetase. The reaction takes place in the presence of glutamine and ATP through an activated gamma-phospho-Glu-tRNA(Gln). The GatDE system is specific for glutamate and does not act on aspartate. In Pyrococcus horikoshii (strain ATCC 700860 / DSM 12428 / JCM 9974 / NBRC 100139 / OT-3), this protein is Glutamyl-tRNA(Gln) amidotransferase subunit D.